The primary structure comprises 620 residues: MSFDIAKYPTLALVDSTQELRLLPKESLPKLCDELRRYLLDSVSRSSGHFASGLGTVELTVALHYVYNTPFDQLIWDVGHQAYPHKILTGRRDKIGTIRQKGGLHPFPWRGESEYDVLSVGHSSTSISAGIGIAVAAEKEGKNRRTVCVIGDGAITAGMAFEAMNHAGDIRPDMLVVLNDNEMSISENVGALNNHLAQLLSGKLYSSLREGGKKVFSGVPPIKELLKRTEEHIKGMVVPGTLFEELGFNYIGPVDGHDVLGLITTLKNMRDLKGPQFLHIMTKKGRGYEPAEKDPITFHAVPKFDPSSGCLPKSSGGLPSYSKIFGDWLCETAAKDNKLMAITPAMREGSGMVEFSRKFPDRYFDVAIAEQHAVTFAAGLAIGGYKPIVAIYSTFLQRAYDQVLHDVAIQKLPVLFAIDRAGIVGADGQTHQGAFDLSYLRCIPEMVIMTPSDENECRQMLYTGYHYNDGPSAVRYPRGNAVGVELTPLEKLPIGKGIVKRRGEKLAILNFGTLMPEAAKVAESLNATLVDMRFVKPLDETLILEMAASHEALVTVEENAIMGGAGSGVNEVLMAHRKPVPVLNIGLPDFFIPQGTQEEMRAELGLDAAGMEAKIKAWLA.

Thiamine diphosphate-binding positions include His-80 and 121 to 123; that span reads GHS. Residue Asp-152 coordinates Mg(2+). Residues 153–154, Asn-181, Tyr-288, and Glu-370 each bind thiamine diphosphate; that span reads GA. Asn-181 serves as a coordination point for Mg(2+).

The protein belongs to the transketolase family. DXPS subfamily. In terms of assembly, homodimer. Mg(2+) is required as a cofactor. It depends on thiamine diphosphate as a cofactor.

The enzyme catalyses D-glyceraldehyde 3-phosphate + pyruvate + H(+) = 1-deoxy-D-xylulose 5-phosphate + CO2. Its pathway is metabolic intermediate biosynthesis; 1-deoxy-D-xylulose 5-phosphate biosynthesis; 1-deoxy-D-xylulose 5-phosphate from D-glyceraldehyde 3-phosphate and pyruvate: step 1/1. Catalyzes the acyloin condensation reaction between C atoms 2 and 3 of pyruvate and glyceraldehyde 3-phosphate to yield 1-deoxy-D-xylulose-5-phosphate (DXP). This is 1-deoxy-D-xylulose-5-phosphate synthase from Escherichia coli O157:H7.